The primary structure comprises 413 residues: Ureide permease 5 (413 aa).

Residues 1–18 (MMIAQELGIYVVESKGGA) are Extracellular-facing. The helical transmembrane segment at 19–39 (ILCLLLSLLCLGTWPALMALL) threads the bilayer. Residues 40–50 (ERRGRLPQHTY) are Cytoplasmic-facing. The helical transmembrane segment at 51 to 71 (LDYSITNFLAAIFIAFVFGGI) threads the bilayer. Topologically, residues 72-91 (GESTHEAPSFITQLTQIQDN) are extracellular. The helical transmembrane segment at 92-112 (WPSVLFAMAGGVGLSIGNLAT) threads the bilayer. Residues 113 to 115 (QYS) lie on the Cytoplasmic side of the membrane. The helical transmembrane segment at 116–136 (LAFVGLSVTEVTAASITVVVG) threads the bilayer. At 137–149 (TTVNYFLDNGLNR) the chain is on the extracellular side. The chain crosses the membrane as a helical span at residues 150–170 (ADILFSGVGCFMVAVCLGSAV). At 171–240 (HSSNSADIKA…RAIKVLGKSM (70 aa)) the chain is on the cytoplasmic side. 232 to 239 (AIKVLGKS) contributes to the ATP binding site. A helical transmembrane segment spans residues 241–261 (VVGLGITFFAGLSFSLFSPLF). The Extracellular portion of the chain corresponds to 262-278 (NLATNDQWHTLKQGVPK). A helical transmembrane segment spans residues 279–299 (LIVYTAFFYFSLSCFVIAVAL). Residues 300–326 (NISFLYKPVLDSPRSSFREYLSDWNGR) are Cytoplasmic-facing. The chain crosses the membrane as a helical span at residues 327 to 347 (GWALAAGLLCGFGNGLQFMGG). At 348 to 352 (QAAGY) the chain is on the extracellular side. A helical membrane pass occupies residues 353–373 (AASDAVQALPLVSTFWGIYLF). The Cytoplasmic portion of the chain corresponds to 374-384 (GEYRRSSTRTY). A helical membrane pass occupies residues 385–405 (ALLVGMLVMFTVAVGLLMASA). The Extracellular portion of the chain corresponds to 406–413 (GERETRFT).

The protein belongs to the plant ureide permease (TC 2.A.7.19) family. As to expression, expressed in lateral roots, rosette leaves, stems, stipules, flower stigma, pedicels and the connective tissue between pollen sacks.

Its subcellular location is the membrane. Functionally, proton-coupled transporter that transports a wide spectrum of oxo derivatives of heterocyclic nitrogen compounds, including allantoin, uric acid and xanthine, but not adenine. Mediates transport of uracil and 5-fluorouracil (a toxic uracil analog). In terms of biological role, proton-coupled transporter that transports a wide spectrum of oxo derivatives of heterocyclic nitrogen compounds, including allantoin, xanthine and uracil. In Arabidopsis thaliana (Mouse-ear cress), this protein is Ureide permease 5.